A 1407-amino-acid chain; its full sequence is DNA-directed RNA polymerase subunit beta' (1407 aa).

Cys70, Cys72, Cys85, and Cys88 together coordinate Zn(2+). Residues Asp460, Asp462, and Asp464 each coordinate Mg(2+). 4 residues coordinate Zn(2+): Cys814, Cys888, Cys895, and Cys898.

It belongs to the RNA polymerase beta' chain family. As to quaternary structure, the RNAP catalytic core consists of 2 alpha, 1 beta, 1 beta' and 1 omega subunit. When a sigma factor is associated with the core the holoenzyme is formed, which can initiate transcription. Mg(2+) serves as cofactor. Requires Zn(2+) as cofactor.

It catalyses the reaction RNA(n) + a ribonucleoside 5'-triphosphate = RNA(n+1) + diphosphate. In terms of biological role, DNA-dependent RNA polymerase catalyzes the transcription of DNA into RNA using the four ribonucleoside triphosphates as substrates. The polypeptide is DNA-directed RNA polymerase subunit beta' (Salmonella arizonae (strain ATCC BAA-731 / CDC346-86 / RSK2980)).